Reading from the N-terminus, the 267-residue chain is Cyclin-C (267 aa).

The Cyclin N-terminal domain occupies 48–151 (IQVLGEQLKL…LLENLDCCLI (104 aa)).

This sequence belongs to the cyclin family. Cyclin C subfamily. Component of the Cdk8 module of the Mediator complex, composed of CycC, Cdk8, kto and skd.

It is found in the nucleus. Component of the Mediator complex, a coactivator involved in regulated gene transcription of nearly all RNA polymerase II-dependent genes. Mediator functions as a bridge to convey information from gene-specific regulatory proteins to the basal RNA polymerase II transcription machinery. Mediator is recruited to promoters by direct interactions with regulatory proteins and serves as a scaffold for the assembly of a functional preinitiation complex with RNA polymerase II and the general transcription factors. Binds to and activates cyclin-dependent kinase Cdk8 that phosphorylates the CTD (C-terminal domain) of the large subunit of RNA polymerase II (RNAp II), which may inhibit the formation of a transcription initiation complex. Required for leg and eye development and macrochaete specification or differentiation. In Drosophila melanogaster (Fruit fly), this protein is Cyclin-C (CycC).